A 69-amino-acid polypeptide reads, in one-letter code: Guanine nucleotide-binding protein subunit gamma (69 aa).

Ser2 is modified (N-acetylserine). Residue Cys66 is modified to Cysteine methyl ester. The S-geranylgeranyl cysteine moiety is linked to residue Cys66. Positions 67–69 are cleaved as a propeptide — removed in mature form; it reads SVL.

The protein belongs to the G protein gamma family. In terms of assembly, g proteins are composed of 3 units, alpha, beta and gamma. Interacts with gpbA, and this requires phlp1. This protein is thought to be subject to lipidation, and this requires phlp1.

The protein resides in the cell membrane. In terms of biological role, guanine nucleotide-binding proteins (G proteins) are involved as a modulator or transducer in various transmembrane signaling systems. This major G-protein of the squid photoreceptor is involved in visual transduction. The beta and gamma chains are required for the GTPase activity, for replacement of GDP by GTP, and for G protein-effector interaction. Required for normal chemotaxis in response to cAMP. The polypeptide is Guanine nucleotide-binding protein subunit gamma (gpgA) (Dictyostelium discoideum (Social amoeba)).